The primary structure comprises 472 residues: Glutamate--tRNA ligase 1 (472 aa).

The 'HIGH' region motif lies at P9–N19. Over residues A112 to S131 the composition is skewed to basic and acidic residues. The tract at residues A112–A133 is disordered. Positions K238–R242 match the 'KMSKS' region motif. An ATP-binding site is contributed by K241.

It belongs to the class-I aminoacyl-tRNA synthetase family. Glutamate--tRNA ligase type 1 subfamily. As to quaternary structure, monomer.

It is found in the cytoplasm. The enzyme catalyses tRNA(Glu) + L-glutamate + ATP = L-glutamyl-tRNA(Glu) + AMP + diphosphate. Catalyzes the attachment of glutamate to tRNA(Glu) in a two-step reaction: glutamate is first activated by ATP to form Glu-AMP and then transferred to the acceptor end of tRNA(Glu). In Gluconobacter oxydans (strain 621H) (Gluconobacter suboxydans), this protein is Glutamate--tRNA ligase 1.